A 466-amino-acid chain; its full sequence is 23S rRNA (uracil(1939)-C(5))-methyltransferase RlmD (466 aa).

Residues 1-54 enclose the TRAM domain; it reads MVDVLNIESLDLEARGIAHRDGKVLFVEGALPGERVTVQTVRRKPSYEIAKVEE. Residues Cys-67, Cys-73, Cys-76, and Cys-155 each contribute to the [4Fe-4S] cluster site. Residues Gln-264, Phe-293, Asn-298, Glu-314, Asn-342, and Asp-363 each contribute to the S-adenosyl-L-methionine site. The active-site Nucleophile is the Cys-393.

This sequence belongs to the class I-like SAM-binding methyltransferase superfamily. RNA M5U methyltransferase family. RlmD subfamily.

It catalyses the reaction uridine(1939) in 23S rRNA + S-adenosyl-L-methionine = 5-methyluridine(1939) in 23S rRNA + S-adenosyl-L-homocysteine + H(+). Functionally, catalyzes the formation of 5-methyl-uridine at position 1939 (m5U1939) in 23S rRNA. This is 23S rRNA (uracil(1939)-C(5))-methyltransferase RlmD from Bordetella pertussis (strain Tohama I / ATCC BAA-589 / NCTC 13251).